Here is a 193-residue protein sequence, read N- to C-terminus: Probable chorismate pyruvate-lyase (193 aa).

Arginine 81, leucine 119, and glutamate 177 together coordinate substrate.

The protein belongs to the UbiC family.

It localises to the cytoplasm. It catalyses the reaction chorismate = 4-hydroxybenzoate + pyruvate. It functions in the pathway cofactor biosynthesis; ubiquinone biosynthesis. Functionally, removes the pyruvyl group from chorismate, with concomitant aromatization of the ring, to provide 4-hydroxybenzoate (4HB) for the ubiquinone pathway. This Idiomarina loihiensis (strain ATCC BAA-735 / DSM 15497 / L2-TR) protein is Probable chorismate pyruvate-lyase.